The following is a 246-amino-acid chain: Ribulose-phosphate 3-epimerase (246 aa).

Substrate is bound at residue Ser9. Positions 34, 36, and 83 each coordinate a divalent metal cation. The active-site Proton acceptor is Asp36. Substrate-binding positions include His83, 159 to 162 (GFGG), 188 to 190 (DGG), and 210 to 212 (GTS). Asp188 is an a divalent metal cation binding site. The active-site Proton donor is Asp188.

The protein belongs to the ribulose-phosphate 3-epimerase family. Requires Co(2+) as cofactor. The cofactor is Fe(2+). Mn(2+) serves as cofactor. Zn(2+) is required as a cofactor.

The enzyme catalyses D-ribulose 5-phosphate = D-xylulose 5-phosphate. Its pathway is carbohydrate degradation; pentose phosphate pathway; D-xylulose 5-phosphate from D-ribulose 5-phosphate (non-oxidative stage): step 1/1. Catalyzes the reversible epimerization of D-ribulose 5-phosphate to D-xylulose 5-phosphate. The polypeptide is Ribulose-phosphate 3-epimerase (RPE1) (Candida glabrata (strain ATCC 2001 / BCRC 20586 / JCM 3761 / NBRC 0622 / NRRL Y-65 / CBS 138) (Yeast)).